The sequence spans 208 residues: Large ribosomal subunit protein uL3 (208 aa).

The segment at 123–147 (RHGQSRGPMAHGSRYHRRPGSMGPV) is disordered.

Belongs to the universal ribosomal protein uL3 family. As to quaternary structure, part of the 50S ribosomal subunit. Forms a cluster with proteins L14 and L19.

Its function is as follows. One of the primary rRNA binding proteins, it binds directly near the 3'-end of the 23S rRNA, where it nucleates assembly of the 50S subunit. The protein is Large ribosomal subunit protein uL3 of Streptococcus sanguinis (strain SK36).